Here is a 150-residue protein sequence, read N- to C-terminus: Leukotriene C4 synthase (150 aa).

The Cytoplasmic segment spans residues 1–6 (MKEETA). A helical transmembrane segment spans residues 7-27 (LLATVTLLGVLLQAYFSLQVI). The Lumenal portion of the chain corresponds to 28-48 (SARRTFHVSPPLTSGPPEFER). R30 provides a ligand contact to glutathione. The active-site Proton donor is R31. The residue at position 36 (S36) is a Phosphoserine. A helical membrane pass occupies residues 49–69 (VFRAQVNCSEYFPLFLATLWV). Glutathione contacts are provided by residues 51 to 55 (RAQVN) and 58 to 59 (EY). At 70-73 (AGIF) the chain is on the cytoplasmic side. A helical transmembrane segment spans residues 74 to 94 (FHEGAAALCGLFYLFARLRYF). A glutathione-binding site is contributed by 93–97 (YFQGY). Topologically, residues 95–104 (QGYARSAQHR) are lumenal. R104 functions as the Proton acceptor in the catalytic mechanism. A helical transmembrane segment spans residues 105 to 124 (LDPLYASARALWLLVAMAAL). The Cytoplasmic portion of the chain corresponds to 125 to 150 (GLLVHFLPGTLRAALFRWLQVLLPMA).

This sequence belongs to the MAPEG family. In terms of assembly, homotrimer. Interacts with ALOX5AP and ALOX5. Post-translationally, phosphorylation at Ser-36 by RPS6KB1 inhibits the leukotriene-C4 synthase activity.

It localises to the nucleus outer membrane. It is found in the endoplasmic reticulum membrane. The protein localises to the nucleus membrane. It catalyses the reaction leukotriene C4 = leukotriene A4 + glutathione. The enzyme catalyses (13S,14S)-epoxy-(4Z,7Z,9E,11E,16Z,19Z)-docosahexaenoate + glutathione = (13R)-S-glutathionyl-(14S)-hydroxy-(4Z,7Z,9E,11E,16Z,19Z)-docosahexaenoate. It functions in the pathway lipid metabolism; leukotriene C4 biosynthesis. Its activity is regulated as follows. Inhibited by MK886. Catalyzes the conjugation of leukotriene A4 with reduced glutathione (GSH) to form leukotriene C4 with high specificity. Can also catalyze the transfer of a glutathionyl group from glutathione (GSH) to 13(S),14(S)-epoxy-docosahexaenoic acid to form maresin conjugate in tissue regeneration 1 (MCTR1), a bioactive lipid mediator that possess potent anti-inflammatory and proresolving actions. This is Leukotriene C4 synthase (Ltc4s) from Rattus norvegicus (Rat).